Consider the following 610-residue polypeptide: Sodium-coupled monocarboxylate transporter 1 (610 aa).

The Extracellular segment spans residues 1–9; it reads MDTPRGIGT. A helical membrane pass occupies residues 10-30; that stretch reads FVVWDYVVFAGMLVISAAIGI. The Cytoplasmic segment spans residues 31–51; that stretch reads YYAFAGGGQQTSKDFLMGGRR. Residues 52–72 traverse the membrane as a helical segment; that stretch reads MTAVPVALSLTASFMSAVTVL. Residues 73-83 lie on the Extracellular side of the membrane; that stretch reads GTPSEVYRFGA. Residues 84 to 104 traverse the membrane as a helical segment; sequence IFSIFAFTYFFVVVISAEVFL. The Cytoplasmic portion of the chain corresponds to 105 to 132; that stretch reads PVFYKLGITSTYEYLELRFNKCVRLCGT. The chain crosses the membrane as a helical span at residues 133–153; sequence VLFIVQTILYTGIVIYAPALA. The Extracellular portion of the chain corresponds to 154-161; the sequence is LNQVTGFD. A helical membrane pass occupies residues 162-182; it reads LWGAVVATGVVCTFYCTLGGL. Residues 183–189 are Cytoplasmic-facing; sequence KAVIWTD. The chain crosses the membrane as a helical span at residues 190–210; the sequence is VFQVGIMVAGFASVIIQAVVM. The Extracellular segment spans residues 211-239; the sequence is QGGISTILNDAYDGGRLNFWNFNPNPLQR. A helical transmembrane segment spans residues 240–260; the sequence is HTFWTIIIGGTFTWTSIYGVN. The Cytoplasmic segment spans residues 261–279; the sequence is QSQVQRYISCKSRFQAKLS. A helical transmembrane segment spans residues 280 to 300; that stretch reads LYINLVGLWAILTCSVFCGLA. Over 301–336 the chain is Extracellular; the sequence is LYSRYHDCDPWTAKKVSAPDQLMPYLVLDILQDYPG. Residues 337 to 359 form a helical membrane-spanning segment; it reads LPGLFVACAYSGTLSTVSSSINA. Residues 360 to 389 are Cytoplasmic-facing; the sequence is LAAVTVEDLIKPYFRSLSERSLSWISQGMS. A helical membrane pass occupies residues 390-410; the sequence is VVYGALCIGMAALASLMGALL. At 411–415 the chain is on the extracellular side; sequence QAALS. The helical transmembrane segment at 416-436 threads the bilayer; the sequence is VFGMVGGPLMGLFALGILVPF. The Cytoplasmic portion of the chain corresponds to 437–439; the sequence is ANS. Residues 440–460 traverse the membrane as a helical segment; it reads IGALVGLMAGFAISLWVGIGA. Residues 461 to 518 lie on the Extracellular side of the membrane; sequence QIYPPLPERTLPLHLDIQGCNSTYNETNLMTTTEMPFTTSVFQIYNVQRTPLMDNWYS. N-linked (GlcNAc...) asparagine glycosylation occurs at Asn-485. A helical membrane pass occupies residues 519 to 539; that stretch reads LSYLYFSTVGTLVTLLVGILV. Topologically, residues 540 to 610 are cytoplasmic; the sequence is SLSTGGRKQN…QSGKSNGTRL (71 aa). The interval 585-610 is disordered; sequence GGTDNPAFNHIELNSDQSGKSNGTRL. Residues 596–610 are compositionally biased toward polar residues; that stretch reads ELNSDQSGKSNGTRL. Positions 608 to 610 match the PDZ-binding motif; it reads TRL.

It belongs to the sodium:solute symporter (SSF) (TC 2.A.21) family. As to quaternary structure, interacts (via PDZ-binding motif) with PDZK1 (via PDZ domains 1 and 3); interaction increases nicotinate transport activity of SLC5A8. In terms of tissue distribution, expressed in normal thyroid, localized at the apical pole of thyroid cells facing the colloid lumen, but expression profoundly decreased in thyroid carcinomas. Expressed in normal colon but absent in colon aberrant crypt foci and colon cancers. Present in normal kidney cortex, brain, prostate, gastric mucosa and breast tissue but was significantly down-regulated in primary gliomas, gastric cancer, prostate tumors and breast tumors.

It is found in the apical cell membrane. It carries out the reaction (S)-lactate(out) + 2 Na(+)(out) = (S)-lactate(in) + 2 Na(+)(in). It catalyses the reaction propanoate(out) + 2 Na(+)(out) = propanoate(in) + 2 Na(+)(in). The catalysed reaction is pyruvate(out) + 2 Na(+)(out) = pyruvate(in) + 2 Na(+)(in). The enzyme catalyses acetate(out) + 2 Na(+)(out) = acetate(in) + 2 Na(+)(in). It carries out the reaction butanoate(out) + 2 Na(+)(out) = butanoate(in) + 2 Na(+)(in). It catalyses the reaction nicotinate(out) + 2 Na(+)(out) = nicotinate(in) + 2 Na(+)(in). The catalysed reaction is (R)-3-hydroxybutanoate(out) + 2 Na(+)(out) = (R)-3-hydroxybutanoate(in) + 2 Na(+)(in). The enzyme catalyses acetoacetate(out) + 2 Na(+)(out) = acetoacetate(in) + 2 Na(+)(in). It carries out the reaction 4-methyl-2-oxopentanoate(out) + 2 Na(+)(out) = 4-methyl-2-oxopentanoate(in) + 2 Na(+)(in). It catalyses the reaction 5-oxo-L-proline(out) + 2 Na(+)(out) = 5-oxo-L-proline(in) + 2 Na(+)(in). The catalysed reaction is iodide(out) = iodide(in). The enzyme catalyses chloride(in) = chloride(out). It carries out the reaction nitrate(in) = nitrate(out). It catalyses the reaction bromide(in) = bromide(out). With respect to regulation, increase of iodide influx inhibited by addition of perchlorate (NaClO(4)), a competitive inhibitor of iodide uptake catalyzed by sodium iodide symporter (NIS). Cotransport of monocarboxylates and nicotinate strongly inhibited by probenecid, nonsteroid anti-inflammatory drugs (ibuprofen, fenoprofen, ketprofen, naproxen) in a Na(+)-dependent manner or by prolonged exposure to external concentrations of monocarboxylates. In terms of biological role, acts as an electrogenic sodium (Na(+)) and chloride (Cl-)-dependent sodium-coupled solute transporter, including transport of monocarboxylates (short-chain fatty acids including L-lactate, D-lactate, pyruvate, acetate, propionate, valerate and butyrate), mocarboxylate drugs (nicotinate, benzoate, salicylate and 5-aminosalicylate) and ketone bodies (beta-D-hydroxybutyrate, acetoacetate and alpha-ketoisocaproate), with a Na(+):substrate stoichiometry of between 4:1 and 2:1. Catalyzes passive carrier mediated diffusion of iodide. Mediates iodide transport from the thyrocyte into the colloid lumen through the apical membrane. May be responsible for the absorption of D-lactate and monocarboxylate drugs from the intestinal tract. Acts as a tumor suppressor, suppressing colony formation in colon cancer, prostate cancer and glioma cell lines. May play a critical role in the entry of L-lactate and ketone bodies into neurons by a process driven by an electrochemical Na(+) gradient and hence contribute to the maintenance of the energy status and function of neurons. Mediates sodium-coupled electrogenic transport of pyroglutamate (5-oxo-L-proline). Can mediate the transport of chloride, bromide, iodide and nitrate ions when the external concentration of sodium ions is reduced. In Homo sapiens (Human), this protein is Sodium-coupled monocarboxylate transporter 1.